The following is a 254-amino-acid chain: Probable transcriptional regulator ycf27 (254 aa).

The 114-residue stretch at 16–129 (KVLIVDDEAS…ELEARIRAVL (114 aa)) folds into the Response regulatory domain. Position 65 is a 4-aspartylphosphate (Asp-65). The H-T-H motif DNA-binding region spans 85–103 (DVPIIMLTALGDVADRITG). Residues 144 to 245 (SGIINFNFLT…ARGTGYLFQR (102 aa)) constitute a DNA-binding region (ompR/PhoB-type).

Its subcellular location is the plastid. The protein localises to the chloroplast. Its function is as follows. Probable promoter-specific protein mediating the interaction between DNA and RNA polymerase. The chain is Probable transcriptional regulator ycf27 (ycf27) from Guillardia theta (Cryptophyte).